The sequence spans 169 residues: MICOS complex subunit MIC19 (169 aa).

Residue G2 is the site of N-myristoyl glycine attachment. Residues 123 to 165 (ENVCQDNENEIVRCLQENPGRVLKCAPLTEAFEKCVGEFRQQV) enclose the CHCH domain. 2 consecutive short sequence motifs (cx9C motif) follow at residues 126-136 (CQDNENEIVRC) and 147-157 (CAPLTEAFEKC). 2 disulfide bridges follow: C126–C157 and C136–C147.

This sequence belongs to the MICOS complex subunit Mic19 family. Metazoan Mic19 subfamily. In terms of assembly, component of the mitochondrial contact site and cristae organizing system (MICOS) complex.

Its subcellular location is the mitochondrion inner membrane. In terms of biological role, plays a role in maintaining mitochondrial morphology. May act as a component of the MICOS complex, a large protein complex of the mitochondria. This Caenorhabditis elegans protein is MICOS complex subunit MIC19.